The primary structure comprises 68 residues: Putative membrane protein insertion efficiency factor (68 aa).

The protein belongs to the UPF0161 family.

It is found in the cell inner membrane. Functionally, could be involved in insertion of integral membrane proteins into the membrane. In Persephonella marina (strain DSM 14350 / EX-H1), this protein is Putative membrane protein insertion efficiency factor.